Reading from the N-terminus, the 1436-residue chain is DNA-directed RNA polymerase subunit beta (1436 aa).

It belongs to the RNA polymerase beta chain family. In terms of assembly, the RNAP catalytic core consists of 2 alpha, 1 beta, 1 beta' and 1 omega subunit. When a sigma factor is associated with the core the holoenzyme is formed, which can initiate transcription.

It carries out the reaction RNA(n) + a ribonucleoside 5'-triphosphate = RNA(n+1) + diphosphate. In terms of biological role, DNA-dependent RNA polymerase catalyzes the transcription of DNA into RNA using the four ribonucleoside triphosphates as substrates. This Wolbachia pipientis protein is DNA-directed RNA polymerase subunit beta.